Consider the following 864-residue polypeptide: Xylosyltransferase 2 (864 aa).

Topologically, residues 1–15 (MVASARVQKLVRRYK) are cytoplasmic. A helical; Signal-anchor for type II membrane protein transmembrane segment spans residues 16 to 36 (LAIATALAILLLQGLVVWSFS). At 37-864 (GLEEDEPGEK…GPVKADGRLR (828 aa)) the chain is on the lumenal side. Disordered regions lie at residues 39-123 (EEDE…RQNL) and 136-158 (AGFP…DNSF). Over residues 53 to 65 (RPLDPGEGSKDTD) the composition is skewed to basic and acidic residues. Basic residues predominate over residues 73–82 (SAGRRHGRWR). N-linked (GlcNAc...) asparagine glycosylation is present at Asn-122. 4 disulfides stabilise this stretch: Cys-162–Cys-190, Cys-206–Cys-448, Cys-467–Cys-480, and Cys-469–Cys-478. UDP-alpha-D-xylose is bound by residues Val-239, Asp-267, and 296–298 (TIW). Asn-327 carries N-linked (GlcNAc...) asparagine glycosylation. 400–401 (DW) provides a ligand contact to UDP-alpha-D-xylose. UDP-alpha-D-xylose-binding positions include Ser-481 and 504 to 505 (RK). Cystine bridges form between Cys-580/Cys-832 and Cys-825/Cys-838. N-linked (GlcNAc...) asparagine glycosylation is present at Asn-682.

The protein belongs to the glycosyltransferase 14 family. XylT subfamily. In terms of assembly, monomer. The cofactor is Mg(2+). Mn(2+) serves as cofactor. In terms of processing, contains disulfide bonds.

The protein localises to the golgi apparatus membrane. It localises to the secreted. The catalysed reaction is UDP-alpha-D-xylose + L-seryl-[protein] = 3-O-(beta-D-xylosyl)-L-seryl-[protein] + UDP + H(+). It functions in the pathway glycan metabolism; chondroitin sulfate biosynthesis. It participates in glycan metabolism; heparan sulfate biosynthesis. Catalyzes the first step in the biosynthesis of chondroitin sulfate, heparan sulfate and dermatan sulfate proteoglycans, such as DCN. Transfers D-xylose from UDP-D-xylose to specific serine residues of the core protein. The polypeptide is Xylosyltransferase 2 (Xylt2) (Rattus norvegicus (Rat)).